The primary structure comprises 226 residues: ATP synthase F(0) complex subunit a (226 aa).

6 helical membrane passes run 6 to 26, 68 to 88, 97 to 117, 138 to 158, 164 to 184, and 200 to 222; these read FASF…IVLF, WTLM…LGLL, QLSM…ITGF, IPML…ALAV, ITAG…LMSI, and TILE…SLYL.

The protein belongs to the ATPase A chain family. As to quaternary structure, component of the ATP synthase complex composed at least of ATP5F1A/subunit alpha, ATP5F1B/subunit beta, ATP5MC1/subunit c (homooctomer), MT-ATP6/subunit a, MT-ATP8/subunit 8, ATP5ME/subunit e, ATP5MF/subunit f, ATP5MG/subunit g, ATP5MK/subunit k, ATP5MJ/subunit j, ATP5F1C/subunit gamma, ATP5F1D/subunit delta, ATP5F1E/subunit epsilon, ATP5PF/subunit F6, ATP5PB/subunit b, ATP5PD/subunit d, ATP5PO/subunit OSCP. ATP synthase complex consists of a soluble F(1) head domain (subunits alpha(3) and beta(3)) - the catalytic core - and a membrane F(0) domain - the membrane proton channel (subunits c, a, 8, e, f, g, k and j). These two domains are linked by a central stalk (subunits gamma, delta, and epsilon) rotating inside the F1 region and a stationary peripheral stalk (subunits F6, b, d, and OSCP). Interacts with DNAJC30; interaction is direct.

It is found in the mitochondrion inner membrane. It catalyses the reaction H(+)(in) = H(+)(out). Its function is as follows. Subunit a, of the mitochondrial membrane ATP synthase complex (F(1)F(0) ATP synthase or Complex V) that produces ATP from ADP in the presence of a proton gradient across the membrane which is generated by electron transport complexes of the respiratory chain. ATP synthase complex consist of a soluble F(1) head domain - the catalytic core - and a membrane F(1) domain - the membrane proton channel. These two domains are linked by a central stalk rotating inside the F(1) region and a stationary peripheral stalk. During catalysis, ATP synthesis in the catalytic domain of F(1) is coupled via a rotary mechanism of the central stalk subunits to proton translocation. With the subunit c (ATP5MC1), forms the proton-conducting channel in the F(0) domain, that contains two crucial half-channels (inlet and outlet) that facilitate proton movement from the mitochondrial intermembrane space (IMS) into the matrix. Protons are taken up via the inlet half-channel and released through the outlet half-channel, following a Grotthuss mechanism. The polypeptide is ATP synthase F(0) complex subunit a (Bos mutus grunniens (Wild yak)).